The following is a 61-amino-acid chain: Small ribosomal subunit protein uS14 (61 aa).

Zn(2+) contacts are provided by Cys-24, Cys-27, Cys-40, and Cys-43.

The protein belongs to the universal ribosomal protein uS14 family. Zinc-binding uS14 subfamily. As to quaternary structure, part of the 30S ribosomal subunit. Contacts proteins S3 and S10. It depends on Zn(2+) as a cofactor.

Its function is as follows. Binds 16S rRNA, required for the assembly of 30S particles and may also be responsible for determining the conformation of the 16S rRNA at the A site. The sequence is that of Small ribosomal subunit protein uS14 from Syntrophobacter fumaroxidans (strain DSM 10017 / MPOB).